The chain runs to 206 residues: Ras-related protein Rab-18 (206 aa).

Positions 17, 20, 21, 22, 23, 34, 35, 40, 66, 123, 125, and 152 each coordinate GTP. Residue Ser-22 participates in Mg(2+) binding. Short sequence motifs (switch) lie at residues 31–45 (DTFD…GVDF) and 63–80 (DTAG…YYRG). A Mg(2+)-binding site is contributed by Thr-40. Cys-199 carries S-palmitoyl cysteine lipidation. The residue at position 203 (Cys-203) is a Cysteine methyl ester. A lipid anchor (S-geranylgeranyl cysteine) is attached at Cys-203. Positions 204 to 206 (SML) are cleaved as a propeptide — removed in mature form.

Belongs to the small GTPase superfamily. Rab family. The cofactor is Mg(2+).

It localises to the endoplasmic reticulum membrane. Its subcellular location is the golgi apparatus. It is found in the cis-Golgi network membrane. The protein resides in the lipid droplet. The protein localises to the apical cell membrane. The enzyme catalyses GTP + H2O = GDP + phosphate + H(+). With respect to regulation, regulated by guanine nucleotide exchange factors (GEFs) which promote the exchange of bound GDP for free GTP. Regulated by GTPase activating proteins (GAPs) which increase the GTP hydrolysis activity at the ER membrane. Inhibited by GDP dissociation inhibitors (GDIs) which prevent Rab-GDP dissociation. The small GTPases Rab are key regulators of intracellular membrane trafficking, from the formation of transport vesicles to their fusion with membranes. Rabs cycle between an inactive GDP-bound form and an active GTP-bound form that is able to recruit to membranes different sets of downstream effectors directly responsible for vesicle formation, movement, tethering and fusion. RAB18 is required for the localization of ZFYVE1 to lipid droplets and for its function in mediating the formation of endoplasmic reticulum-lipid droplets (ER-LD) contacts. Also required for maintaining endoplasmic reticulum structure. Plays a role in apical endocytosis/recycling. Plays a key role in eye and brain development and neurodegeneration. The protein is Ras-related protein Rab-18 (RAB18) of Gallus gallus (Chicken).